An 800-amino-acid polypeptide reads, in one-letter code: Ion-translocating oxidoreductase complex subunit C (800 aa).

4Fe-4S ferredoxin-type domains lie at 367-398 (DEFS…QQLY) and 408-437 (KARG…VQYY). 8 residues coordinate [4Fe-4S] cluster: cysteine 378, cysteine 381, cysteine 384, cysteine 388, cysteine 417, cysteine 420, cysteine 423, and cysteine 427. Composition is skewed to low complexity over residues 536–553 (GATP…APAP), 571–583 (AKQA…PAAT), 599–617 (AAIA…APAA), 647–667 (AKQA…ADPA), and 675–690 (AAIA…KQAA). Disordered stretches follow at residues 536–558 (GATP…DDPR), 571–631 (AKQA…QDDP), and 647–706 (AKQA…ENTD). Polar residues predominate over residues 693 to 705 (HATTEPVTVQENT).

The protein belongs to the 4Fe4S bacterial-type ferredoxin family. RnfC subfamily. In terms of assembly, the complex is composed of six subunits: RnfA, RnfB, RnfC, RnfD, RnfE and RnfG. [4Fe-4S] cluster is required as a cofactor.

It localises to the cell inner membrane. Its function is as follows. Part of a membrane-bound complex that couples electron transfer with translocation of ions across the membrane. This Edwardsiella ictaluri (strain 93-146) protein is Ion-translocating oxidoreductase complex subunit C.